The following is a 76-amino-acid chain: Esculentin-2CG1 (76 aa).

The N-terminal stretch at 1–22 is a signal peptide; it reads MFTMKKSMLLLFFLGTISLSLC. The propeptide at 23 to 37 is removed in mature form; the sequence is EEERSADEDDGEEEV. Cys-70 and Cys-76 are disulfide-bonded.

In terms of tissue distribution, expressed by the skin glands.

Its subcellular location is the secreted. Its function is as follows. Antimicrobial peptide active against a variety of Gram-positive and some Gram-negative bacterial strains. Has antifungal activity against a slime mold isolate. Has hemolytic activity against human erythrocytes. The protein is Esculentin-2CG1 of Amolops chunganensis (Chungan torrent frog).